We begin with the raw amino-acid sequence, 100 residues long: Aspartyl/glutamyl-tRNA(Asn/Gln) amidotransferase subunit C (100 aa).

Belongs to the GatC family. As to quaternary structure, heterotrimer of A, B and C subunits.

The enzyme catalyses L-glutamyl-tRNA(Gln) + L-glutamine + ATP + H2O = L-glutaminyl-tRNA(Gln) + L-glutamate + ADP + phosphate + H(+). It carries out the reaction L-aspartyl-tRNA(Asn) + L-glutamine + ATP + H2O = L-asparaginyl-tRNA(Asn) + L-glutamate + ADP + phosphate + 2 H(+). Allows the formation of correctly charged Asn-tRNA(Asn) or Gln-tRNA(Gln) through the transamidation of misacylated Asp-tRNA(Asn) or Glu-tRNA(Gln) in organisms which lack either or both of asparaginyl-tRNA or glutaminyl-tRNA synthetases. The reaction takes place in the presence of glutamine and ATP through an activated phospho-Asp-tRNA(Asn) or phospho-Glu-tRNA(Gln). This Rickettsia peacockii (strain Rustic) protein is Aspartyl/glutamyl-tRNA(Asn/Gln) amidotransferase subunit C.